A 252-amino-acid chain; its full sequence is MNMIDLNSDLGEGFGQWKMGDDNTMLSIVTSANVACGFHAGDPAGIFQTLKSAHKNQVVIGAHVSYPDLVGFGRRNMDVSSNELIADVIYQIGALKGLAVAAGTTVSYVKPHGALYNTIAHNEYQALAVITAIREVDDNLVLVGLAGSKLLDLAQENGLRTVAEAFADRAYTPQGTLVSRREKGSVLHDANLVARRMLQLVTEGGVEAIDGSFTRIQADSICVHGDSPDAVEMARQVKLTLQQAGITVRSFI.

Belongs to the LamB/PxpA family. In terms of assembly, forms a complex composed of PxpA, PxpB and PxpC.

The catalysed reaction is 5-oxo-L-proline + ATP + 2 H2O = L-glutamate + ADP + phosphate + H(+). Catalyzes the cleavage of 5-oxoproline to form L-glutamate coupled to the hydrolysis of ATP to ADP and inorganic phosphate. This chain is 5-oxoprolinase subunit A, found in Photorhabdus laumondii subsp. laumondii (strain DSM 15139 / CIP 105565 / TT01) (Photorhabdus luminescens subsp. laumondii).